A 272-amino-acid chain; its full sequence is FAS1 domain-containing protein YDR262W (272 aa).

The N-terminal stretch at 1-26 (MIFNLPVSVLLYFSLIWAMEPSFVRG) is a signal peptide. One can recognise an FAS1 domain in the interval 100–269 (PLSLESKLSL…GVILMVDFTL (170 aa)).

It localises to the vacuole. The polypeptide is FAS1 domain-containing protein YDR262W (Saccharomyces cerevisiae (strain ATCC 204508 / S288c) (Baker's yeast)).